Consider the following 241-residue polypeptide: Small ribosomal subunit protein uS2 (241 aa).

It belongs to the universal ribosomal protein uS2 family.

The chain is Small ribosomal subunit protein uS2 from Yersinia pestis bv. Antiqua (strain Antiqua).